The chain runs to 146 residues: NADPH-dependent 7-cyano-7-deazaguanine reductase (146 aa).

Catalysis depends on C48, which acts as the Thioimide intermediate. D55 acts as the Proton donor in catalysis. Substrate contacts are provided by residues 70–72 and 89–90; these read VES and HE.

It belongs to the GTP cyclohydrolase I family. QueF type 1 subfamily.

The protein localises to the cytoplasm. It catalyses the reaction 7-aminomethyl-7-carbaguanine + 2 NADP(+) = 7-cyano-7-deazaguanine + 2 NADPH + 3 H(+). It functions in the pathway tRNA modification; tRNA-queuosine biosynthesis. Catalyzes the NADPH-dependent reduction of 7-cyano-7-deazaguanine (preQ0) to 7-aminomethyl-7-deazaguanine (preQ1). The polypeptide is NADPH-dependent 7-cyano-7-deazaguanine reductase (Helicobacter pylori (strain Shi470)).